The primary structure comprises 53 residues: MFRWGIIFLVIALIAAALGFGGLAGTAAGAAKIVFVVGIILFLVSLFMGRRRP.

The next 2 membrane-spanning stretches (helical) occupy residues 4-24 (WGII…GGLA) and 28-48 (AGAA…SLFM).

Belongs to the UPF0391 family.

Its subcellular location is the cell membrane. The sequence is that of UPF0391 membrane protein ESA_03375 from Cronobacter sakazakii (strain ATCC BAA-894) (Enterobacter sakazakii).